We begin with the raw amino-acid sequence, 289 residues long: Glycine-rich RNA-binding protein 5, mitochondrial (289 aa).

The transit peptide at M1–M31 directs the protein to the mitochondrion. The 78-residue stretch at S34–E111 folds into the RRM domain. The tract at residues Q219 to A289 is disordered. The span at G257–N272 shows a compositional bias: polar residues.

Belongs to the GR-RBP family. As to quaternary structure, homodimer. Interacts with MORF8/RIP1 AND RBG3/ORRM3. Binds to RBG2/ORRM5.

Its subcellular location is the mitochondrion. Its function is as follows. Possibly has a role in RNA transcription or processing during stress. Binds RNAs and DNAs sequence with a preference to single-stranded nucleic acids. Displays strong affinity to poly(U) sequence. Involved in C-to-U editing of mitochondrial RNA. Functions as a major mitochondrial editing factor. Controls 44 percent of the mitochondrial editing sites. This is Glycine-rich RNA-binding protein 5, mitochondrial from Arabidopsis thaliana (Mouse-ear cress).